Here is a 1310-residue protein sequence, read N- to C-terminus: Adhesion G protein-coupled receptor A3 (1310 aa).

Residues 1 to 27 form the signal peptide; it reads MEPPPPLLLLPLALLALLWGGERGAAA. The LRRNT domain maps to 28–70; it reads LPAGCKHDGRARGTGRAAAAAEGKVVCSSLELAQVLPPDTLPN. Topologically, residues 28–747 are extracellular; the sequence is LPAGCKHDGR…TELYTPAASL (720 aa). Asparagine 70 and asparagine 87 each carry an N-linked (GlcNAc...) asparagine glycan. LRR repeat units lie at residues 71–92, 95–116, 119–140, and 143–164; these read RTVT…SFSG, LLER…AFWG, SLKR…VFRG, and NLVR…TFDY. 10 N-linked (GlcNAc...) asparagine glycosylation sites follow: asparagine 148, asparagine 195, asparagine 290, asparagine 321, asparagine 422, asparagine 442, asparagine 581, asparagine 641, asparagine 676, and asparagine 717. The LRRCT domain maps to 176 to 226; the sequence is EYLLCDCNILWMHRWVKERNITVRDTRCVYPKSLQAQPVTGVKQELLTCDP. An Ig-like domain is found at 231–329; that stretch reads PSFYMTPSHR…GNNTRTVDIV (99 aa). An intrachain disulfide couples cysteine 253 to cysteine 313. The region spanning 572–739 is the GAIN-B domain; sequence LDKQLSFKCN…AVLMDLTGTE (168 aa). Residues 690 to 739 are GPS; sequence AAQWDFDLLNGQGGWKSDGCCILYSDENITTIQCGSLGNYAVLMDLTGTE. The cysteines at positions 709 and 723 are disulfide-linked. Residues 748-768 form a helical membrane-spanning segment; sequence LHPVVYTTAITLLLCLLAVII. At 769–785 the chain is on the cytoplasmic side; sequence SYMYHHSLIRISLKSWH. The chain crosses the membrane as a helical span at residues 786–806; it reads MLVNLCFHILLTCVVFVGGIT. Residues 807 to 815 lie on the Extracellular side of the membrane; sequence QTRNASVCQ. An N-linked (GlcNAc...) asparagine glycan is attached at asparagine 810. A helical transmembrane segment spans residues 816–836; that stretch reads AVGIILHYSTLATVLWVGVTA. Residues 837–865 lie on the Cytoplasmic side of the membrane; that stretch reads RNIYKQVTKKAKRCQDPDEPPAPPRPMLR. A helical transmembrane segment spans residues 866 to 886; it reads FYLIGGGIPIIVCGITAAANI. Topologically, residues 887-908 are extracellular; it reads KNYGSRPSAPYCWMAWEPSLGA. The helical transmembrane segment at 909–929 threads the bilayer; it reads FYGPASFITFVNCMYFLSIFI. At 930–985 the chain is on the cytoplasmic side; the sequence is QLKRHPERKYELKEPTEEQQRLAANENGEINHQDSMSLSLISTSTLENEHSFQSQL. The chain crosses the membrane as a helical span at residues 986-1006; that stretch reads LGASLTLLLYVILWMFGAMAV. Residues 1007 to 1013 are Extracellular-facing; sequence SLYYPLD. The chain crosses the membrane as a helical span at residues 1014 to 1034; that stretch reads LVFSFFFGATCLSFSAFMMVH. Residues 1035–1310 lie on the Cytoplasmic side of the membrane; that stretch reads HCINREDVRL…TGLWKHETTV (276 aa). Disordered regions lie at residues 1065 to 1084, 1187 to 1208, and 1221 to 1264; these read PPNS…SSAE, VEGS…GHSR, and YNPP…ADLE. Polar residues predominate over residues 1222–1239; it reads NPPQQDSSDACSTLPKSS. Positions 1308–1310 match the PDZ-binding motif; sequence TTV.

It belongs to the G-protein coupled receptor 2 family. Adhesion G-protein coupled receptor (ADGR) subfamily. In terms of assembly, interacts (via PDZ-binding motif) with DLG1. In terms of tissue distribution, expressed by spermatogonial progenitor cells located within the outer cell layer of the seminiferous tubule and by multipotent adult spermatogonial-derived stem cells.

Its subcellular location is the membrane. Its function is as follows. Orphan receptor that may have a role in planar cell polarity pathway. This Mus musculus (Mouse) protein is Adhesion G protein-coupled receptor A3 (Adgra3).